Reading from the N-terminus, the 88-residue chain is HssA/B-like protein 13 (88 aa).

This sequence belongs to the hssA/B family.

In Dictyostelium discoideum (Social amoeba), this protein is HssA/B-like protein 13 (hssl13).